The sequence spans 273 residues: Putative pyruvate, phosphate dikinase regulatory protein (273 aa).

153 to 160 (GISRTSKT) lines the ADP pocket.

It belongs to the pyruvate, phosphate/water dikinase regulatory protein family. PDRP subfamily.

The catalysed reaction is N(tele)-phospho-L-histidyl/L-threonyl-[pyruvate, phosphate dikinase] + ADP = N(tele)-phospho-L-histidyl/O-phospho-L-threonyl-[pyruvate, phosphate dikinase] + AMP + H(+). It catalyses the reaction N(tele)-phospho-L-histidyl/O-phospho-L-threonyl-[pyruvate, phosphate dikinase] + phosphate + H(+) = N(tele)-phospho-L-histidyl/L-threonyl-[pyruvate, phosphate dikinase] + diphosphate. Functionally, bifunctional serine/threonine kinase and phosphorylase involved in the regulation of the pyruvate, phosphate dikinase (PPDK) by catalyzing its phosphorylation/dephosphorylation. This Rhizobium leguminosarum bv. trifolii (strain WSM2304) protein is Putative pyruvate, phosphate dikinase regulatory protein.